Consider the following 710-residue polypeptide: Secretin OutD (710 aa).

Positions 1-27 are cleaved as a signal peptide; sequence MLGKGIKKSWGWLGLTVLLLGSPCGWA. An N0 region spans residues 28–105; it reads AEFSASFKGT…DNGVLKVIRS (78 aa). The tract at residues 123 to 190 is N1; that stretch reads IGDELVTRVV…DIVNTVDKTG (68 aa). The tract at residues 192-262 is N2; the sequence is REMVTVPLTY…VEMIRQLDRK (71 aa). The segment at 288–399 is N3; that stretch reads GNGTSGNRNS…INQLDIRRPQ (112 aa). The disordered stretch occupies residues 289-353; it reads NGTSGNRNSS…AFGSTSSSGG (65 aa). Residues 401–648 are secretin; sequence LVEAIIAEIQ…MLFLRPTIIR (248 aa). A s domain region spans residues 691–710; sequence TYTFRQVQSSISDFYKPEGR.

This sequence belongs to the bacterial secretin family. GSP D subfamily. Forms a cylindrical channel with 15 subunits. Interacts with pilotin OutS.

The protein localises to the cell outer membrane. In terms of biological role, involved in a type II secretion system (T2SS, formerly general secretion pathway, GSP) for the export of proteins. Required for the translocation of the multiple pectic enzymes. This subunit forms the outer membrane channel. In Dickeya dadantii (strain 3937) (Erwinia chrysanthemi (strain 3937)), this protein is Secretin OutD (outD).